Here is a 334-residue protein sequence, read N- to C-terminus: Uroporphyrinogen decarboxylase (334 aa).

Substrate is bound by residues Arg22 to Arg26, Asp71, Tyr140, Ser195, and His310.

This sequence belongs to the uroporphyrinogen decarboxylase family. Homodimer.

The protein localises to the cytoplasm. It catalyses the reaction uroporphyrinogen III + 4 H(+) = coproporphyrinogen III + 4 CO2. It participates in porphyrin-containing compound metabolism; protoporphyrin-IX biosynthesis; coproporphyrinogen-III from 5-aminolevulinate: step 4/4. Functionally, catalyzes the decarboxylation of four acetate groups of uroporphyrinogen-III to yield coproporphyrinogen-III. The chain is Uroporphyrinogen decarboxylase from Chlamydia muridarum (strain MoPn / Nigg).